The following is a 266-amino-acid chain: Probable catechol O-methyltransferase 1 (266 aa).

Ile-56, Glu-78, Ser-86, Glu-106, Val-107, Ala-135, and Asp-162 together coordinate S-adenosyl-L-methionine. Asp-162 is a binding site for Mg(2+). Lys-165 lines the substrate pocket. 2 residues coordinate Mg(2+): Asp-190 and Asn-191. Asn-191 is a substrate binding site.

The protein belongs to the class I-like SAM-binding methyltransferase superfamily. Cation-dependent O-methyltransferase family. Requires Mg(2+) as cofactor.

It is found in the cytoplasm. It localises to the nucleus. The catalysed reaction is a catechol + S-adenosyl-L-methionine = a guaiacol + S-adenosyl-L-homocysteine + H(+). The chain is Probable catechol O-methyltransferase 1 from Schizosaccharomyces pombe (strain 972 / ATCC 24843) (Fission yeast).